The sequence spans 195 residues: 3-isopropylmalate dehydratase small subunit (195 aa).

Belongs to the LeuD family. LeuD type 1 subfamily. In terms of assembly, heterodimer of LeuC and LeuD.

It catalyses the reaction (2R,3S)-3-isopropylmalate = (2S)-2-isopropylmalate. It participates in amino-acid biosynthesis; L-leucine biosynthesis; L-leucine from 3-methyl-2-oxobutanoate: step 2/4. Functionally, catalyzes the isomerization between 2-isopropylmalate and 3-isopropylmalate, via the formation of 2-isopropylmaleate. This chain is 3-isopropylmalate dehydratase small subunit, found in Parafrankia sp. (strain EAN1pec).